The chain runs to 513 residues: rRNA N(6)-adenosine-methyltransferase ZCCHC4 (513 aa).

Zn(2+) is bound by residues cysteine 40, histidine 42, cysteine 64, cysteine 73, cysteine 125, cysteine 128, histidine 140, and histidine 143. A GRF-type zinc finger spans residues 40–82; the sequence is CPHGPTLLFVKVTQGKEETRRFYACSACRDRKDCNFFQWEDEK. Residues 172-175, arginine 202, aspartate 225, 243-244, and aspartate 276 contribute to the S-adenosyl-L-methionine site; these read QYLF and NM. A regulatory loop region spans residues 337 to 357; that stretch reads QVDYDNHALYKHGKTGRKQSP. Zn(2+) is bound by residues cysteine 380, cysteine 383, histidine 393, cysteine 394, cysteine 397, cysteine 400, histidine 410, cysteine 411, cysteine 414, cysteine 417, histidine 424, cysteine 425, cysteine 428, cysteine 431, histidine 436, and cysteine 438. The DHHC domain maps to 395 to 447; the sequence is ELCNSCTSKDGRKWNHCFLCKKCVKPSWIHCSICNHCAVPDHSCEGPKHGCFI. A CCHC-type zinc finger spans residues 443-460; sequence HGCFICGELDHKRSTCPN. Residues 466–481 are compositionally biased toward basic residues; it reads RANKAVRKQKQRKSNK. Residues 466 to 513 form a disordered region; it reads RANKAVRKQKQRKSNKMKMETTKGQSMNHTSATRRKKRRERAHQYLGS. Residues 487 to 496 show a composition bias toward polar residues; that stretch reads TKGQSMNHTS. Over residues 497–506 the composition is skewed to basic residues; sequence ATRRKKRRER.

Belongs to the ZCCHC4 family. In terms of assembly, interacts with components of the ASC-1 complex TRIP4, ASCC1, ASCC2 and ASCC3. Interact with AHCYL1 and AHCYL2. Interact with YTHDC2.

It localises to the nucleus. It is found in the nucleolus. Its subcellular location is the cytoplasm. It catalyses the reaction adenosine(4220) in 28S rRNA + S-adenosyl-L-methionine = N(6)-methyladenosine(4220) in 28S rRNA + S-adenosyl-L-homocysteine + H(+). RRNA N6-methyltransferase that specifically methylates the adenine in position 4220 of 28S rRNA. N6-methylation of adenine(4220) in 28S rRNA is required for translation. This Homo sapiens (Human) protein is rRNA N(6)-adenosine-methyltransferase ZCCHC4.